The chain runs to 132 residues: Small ribosomal subunit protein uS11 (132 aa).

Belongs to the universal ribosomal protein uS11 family. Part of the 30S ribosomal subunit.

Functionally, located on the platform of the 30S subunit. The polypeptide is Small ribosomal subunit protein uS11 (Thermoplasma volcanium (strain ATCC 51530 / DSM 4299 / JCM 9571 / NBRC 15438 / GSS1)).